The primary structure comprises 365 residues: Donuts protein 1 (365 aa).

A disordered region spans residues 28–49 (NSGLELPSQDYTNVEEKESSPK). Positions 82-125 (EKLCVLKELKIAFPEVDDTLIKAILIASQGVLEPAFNSLLYYSS) constitute a CUE domain. Disordered regions lie at residues 215–246 (HNTILSNEDSILKGKEKGKEEEKEKGEEKGVN) and 286–335 (ESEE…YKSA). Positions 224-244 (SILKGKEKGKEEEKEKGEEKG) are enriched in basic and acidic residues. Residues 286-295 (ESEEEEEQDV) are compositionally biased toward acidic residues. Residues 315 to 331 (EAQRDSADRLPAKDDGG) are compositionally biased toward basic and acidic residues.

In terms of assembly, may interact directly with ADY3. Probable component of a spindle pole body (SPB) complex composed of ADY3, SSP1, DON1, MPC54, SPO21/MPC70, NUD1 and CNM67.

The protein localises to the prospore membrane. Functionally, involved in the pathway that organizes the prospore membrane (PSM) during sporulation. The sequence is that of Donuts protein 1 (DON1) from Saccharomyces cerevisiae (strain ATCC 204508 / S288c) (Baker's yeast).